We begin with the raw amino-acid sequence, 118 residues long: Holo-[acyl-carrier-protein] synthase (118 aa).

Positions 8 and 58 each coordinate Mg(2+).

It belongs to the P-Pant transferase superfamily. AcpS family. The cofactor is Mg(2+).

Its subcellular location is the cytoplasm. The catalysed reaction is apo-[ACP] + CoA = holo-[ACP] + adenosine 3',5'-bisphosphate + H(+). Its function is as follows. Transfers the 4'-phosphopantetheine moiety from coenzyme A to a Ser of acyl-carrier-protein. The chain is Holo-[acyl-carrier-protein] synthase from Streptococcus pyogenes serotype M1.